The primary structure comprises 659 residues: Homeobox protein slou (659 aa).

Polar residues predominate over residues 1–21 (MVMLQSPAQKASDSASAQNTA). Disordered regions lie at residues 1 to 63 (MVML…PAAK), 94 to 152 (MSSE…SFSS), 198 to 298 (AQQH…AAPS), 316 to 349 (TQAS…PSGR), 376 to 440 (QIAA…DRDA), and 455 to 548 (PNKF…PRRA). 3 stretches are compositionally biased toward low complexity: residues 27–51 (SPNS…SVVS), 95–108 (SSES…LSPL), and 120–135 (HNNN…NSNT). The span at 136–152 (RRSQSPPASVGSVSFSS) shows a compositional bias: polar residues. The segment covering 201-232 (HMHHHQHQHHQHPAHPHSHQHPHPHPHPHPHP) has biased composition (basic residues). Tandem repeats lie at residues 221–222 (HP), 223–224 (HP), 225–226 (HP), 227–228 (HP), 229–230 (HP), 231–232 (HP), and 233–234 (HP). Residues 221 to 234 (HPHPHPHPHPHPHP) form a 7 X 2 AA tandem repeats of H-P region. Composition is skewed to pro residues over residues 250–263 (PPSP…PPTS) and 275–286 (PIAPPQNPPHSS). 2 stretches are compositionally biased toward low complexity: residues 287–298 (QPPQQQQVAAPS) and 316–347 (TQAS…GSPS). Acidic residues predominate over residues 388 to 401 (SEELNVDGNDEDSN). The segment covering 417-435 (RSVNSSAAANPSSASTSAS) has biased composition (low complexity). Acidic residues-rich tracts occupy residues 478 to 492 (RDEE…DQSE) and 500 to 519 (NDMD…DPSS). The span at 528–543 (SRNGDGKSGGGGGGGS) shows a compositional bias: gly residues. Residues 545-604 (PRRARTAFTYEQLVSLENKFKTTRYLSVCERLNLALSLSLTETQVKIWFQNRRTKWKKQN) constitute a DNA-binding region (homeobox).

Belongs to the NK-1 homeobox family. In terms of tissue distribution, mesodermal precursor cells of distinct muscles during embryogenesis, a subset of neuronal cells of the CNS and their precursors and also in cells of a small region of the midgut.

Its subcellular location is the nucleus. Functionally, may play a role in specifying the identity of particular somatic muscles and neurons of the CNS. The polypeptide is Homeobox protein slou (slou) (Drosophila melanogaster (Fruit fly)).